Consider the following 491-residue polypeptide: Probable cytosol aminopeptidase (491 aa).

Positions 260 and 265 each coordinate Mn(2+). The active site involves Lys272. Asp284, Asp343, and Glu345 together coordinate Mn(2+). Arg347 is an active-site residue.

This sequence belongs to the peptidase M17 family. Requires Mn(2+) as cofactor.

The protein localises to the cytoplasm. The enzyme catalyses Release of an N-terminal amino acid, Xaa-|-Yaa-, in which Xaa is preferably Leu, but may be other amino acids including Pro although not Arg or Lys, and Yaa may be Pro. Amino acid amides and methyl esters are also readily hydrolyzed, but rates on arylamides are exceedingly low.. It catalyses the reaction Release of an N-terminal amino acid, preferentially leucine, but not glutamic or aspartic acids.. Functionally, presumably involved in the processing and regular turnover of intracellular proteins. Catalyzes the removal of unsubstituted N-terminal amino acids from various peptides. The sequence is that of Probable cytosol aminopeptidase from Trichormus variabilis (strain ATCC 29413 / PCC 7937) (Anabaena variabilis).